The following is a 72-amino-acid chain: Translation initiation factor IF-1 (72 aa).

An S1-like domain is found at 1–72; it reads MAKQSAIEKD…SKGRIAFRYK (72 aa).

Belongs to the IF-1 family. In terms of assembly, component of the 30S ribosomal translation pre-initiation complex which assembles on the 30S ribosome in the order IF-2 and IF-3, IF-1 and N-formylmethionyl-tRNA(fMet); mRNA recruitment can occur at any time during PIC assembly.

It is found in the cytoplasm. Its function is as follows. One of the essential components for the initiation of protein synthesis. Stabilizes the binding of IF-2 and IF-3 on the 30S subunit to which N-formylmethionyl-tRNA(fMet) subsequently binds. Helps modulate mRNA selection, yielding the 30S pre-initiation complex (PIC). Upon addition of the 50S ribosomal subunit IF-1, IF-2 and IF-3 are released leaving the mature 70S translation initiation complex. The polypeptide is Translation initiation factor IF-1 (Parabacteroides distasonis (strain ATCC 8503 / DSM 20701 / CIP 104284 / JCM 5825 / NCTC 11152)).